The sequence spans 831 residues: Replication restart protein PriA (831 aa).

The 168-residue stretch at 304 to 471 (VLPLQGYHQV…HRHQNDPQRH (168 aa)) folds into the Helicase ATP-binding domain. 317 to 324 (GVTGSGKT) contributes to the ATP binding site. The short motif at 413–416 (DEEH) is the DEAH box element. Zn(2+) contacts are provided by cysteine 537, cysteine 540, cysteine 546, cysteine 549, cysteine 568, cysteine 571, cysteine 581, and cysteine 584. One can recognise a Helicase C-terminal domain in the interval 575–735 (EIQPKVCPEC…ELPQREMLNY (161 aa)).

This sequence belongs to the helicase family. PriA subfamily. As to quaternary structure, component of the replication restart primosome. Zn(2+) is required as a cofactor.

The enzyme catalyses Couples ATP hydrolysis with the unwinding of duplex DNA by translocating in the 3'-5' direction.. It catalyses the reaction ATP + H2O = ADP + phosphate + H(+). Its function is as follows. Initiates the restart of stalled replication forks, which reloads the replicative helicase on sites other than the origin of replication. Recognizes and binds to abandoned replication forks and remodels them to uncover a helicase loading site. Promotes assembly of the primosome at these replication forks. The protein is Replication restart protein PriA of Synechocystis sp. (strain ATCC 27184 / PCC 6803 / Kazusa).